The primary structure comprises 712 residues: Amino-acid acetyltransferase, mitochondrial (712 aa).

Residues 1–47 (MFVRTCRSSCNAWTNATSTTQAGSLLPPNAHRSVVLTLSLQACSART) constitute a mitochondrion transit peptide. The interval 55-99 (FASTTSQSKRQEAEAEEKRQVSPRLGPSAPRSSYPSSAEARQKRD) is disordered. Basic and acidic residues predominate over residues 63–74 (KRQEAEAEEKRQ). Residues 81–93 (PSAPRSSYPSSAE) are compositionally biased toward low complexity. The N-acetyltransferase domain maps to 534–702 (GVPRLRLTDT…YEDVCRNIAP (169 aa)).

Belongs to the acetyltransferase family.

It is found in the mitochondrion. It carries out the reaction L-glutamate + acetyl-CoA = N-acetyl-L-glutamate + CoA + H(+). Its pathway is amino-acid biosynthesis; L-arginine biosynthesis; N(2)-acetyl-L-ornithine from L-glutamate: step 1/4. With respect to regulation, inhibited by arginine. In terms of biological role, N-acetylglutamate synthase involved in arginine biosynthesis. This Neurospora crassa (strain ATCC 24698 / 74-OR23-1A / CBS 708.71 / DSM 1257 / FGSC 987) protein is Amino-acid acetyltransferase, mitochondrial (arg-14).